Reading from the N-terminus, the 152-residue chain is MAKRVQVVLSQDVYKLGRDGDLVEVAPGYARNFLLPQGLAQPVTRGVLKQVEFRRAREAARLVAEKEAAVARKTALETIGRFVIKKQAGEGESIFGTVTNGDVAEAIQVATTQEVDRREITLPEIHKLGFYKVQVKLHADVTAEVEIQVAAL.

Belongs to the bacterial ribosomal protein bL9 family.

Functionally, binds to the 23S rRNA. This chain is Large ribosomal subunit protein bL9, found in Synechococcus elongatus (strain ATCC 33912 / PCC 7942 / FACHB-805) (Anacystis nidulans R2).